A 245-amino-acid chain; its full sequence is NLP effector protein Pc118551 (245 aa).

Positions 1-19 (MNLRAFLLSAVAALVAVQA) are cleaved as a signal peptide. Residues 121–127 (QRRHLWE) carry the Hepta-peptide GHRHDWE motif motif. An N-linked (GlcNAc...) asparagine glycan is attached at Asn140.

This sequence belongs to the Necrosis inducing protein (NPP1) family.

The protein resides in the secreted. Functionally, secreted effector that contributes strongly to virulence during infection by P.capsici. The sequence is that of NLP effector protein Pc118551 from Phytophthora capsici.